Reading from the N-terminus, the 169-residue chain is UPF0303 protein BMEI0598 (169 aa).

It belongs to the UPF0303 family.

The chain is UPF0303 protein BMEI0598 from Brucella melitensis biotype 1 (strain ATCC 23456 / CCUG 17765 / NCTC 10094 / 16M).